Reading from the N-terminus, the 377-residue chain is Succinyl-diaminopimelate desuccinylase (377 aa).

Zn(2+) is bound at residue His-67. The active site involves Asp-69. Asp-100 contacts Zn(2+). Catalysis depends on Glu-134, which acts as the Proton acceptor. Residues Glu-135, Glu-163, and His-349 each contribute to the Zn(2+) site.

Belongs to the peptidase M20A family. DapE subfamily. In terms of assembly, homodimer. Requires Zn(2+) as cofactor. The cofactor is Co(2+).

It catalyses the reaction N-succinyl-(2S,6S)-2,6-diaminopimelate + H2O = (2S,6S)-2,6-diaminopimelate + succinate. The protein operates within amino-acid biosynthesis; L-lysine biosynthesis via DAP pathway; LL-2,6-diaminopimelate from (S)-tetrahydrodipicolinate (succinylase route): step 3/3. In terms of biological role, catalyzes the hydrolysis of N-succinyl-L,L-diaminopimelic acid (SDAP), forming succinate and LL-2,6-diaminopimelate (DAP), an intermediate involved in the bacterial biosynthesis of lysine and meso-diaminopimelic acid, an essential component of bacterial cell walls. This chain is Succinyl-diaminopimelate desuccinylase, found in Shewanella frigidimarina (strain NCIMB 400).